Here is a 483-residue protein sequence, read N- to C-terminus: Arginine/agmatine antiporter (483 aa).

12 helical membrane passes run Ile11–Phe31, Ala41–Ala61, Gly85–Gly105, Tyr124–Phe144, Phe157–Thr177, Ser208–Gly228, Ala239–Phe259, Val289–Leu309, Pro336–Phe356, Met364–Val384, Leu415–Leu435, and Glu458–Ala478.

It belongs to the amino acid-polyamine-organocation (APC) superfamily. Basic amino acid/polyamine antiporter (APA) (TC 2.A.3.2) family.

It is found in the cell inner membrane. Catalyzes the exchange of L-arginine for agmatine. The arginine uptake by the bacterium in the macrophage may be a virulence factor against the host innate immune response. The polypeptide is Arginine/agmatine antiporter (aaxC) (Chlamydia trachomatis serovar A (strain ATCC VR-571B / DSM 19440 / HAR-13)).